A 161-amino-acid polypeptide reads, in one-letter code: MRLFRSREVVGIAADALDFALEASAETHPNEYMGLLRGEEARRVGVDRDGYVVTDVLIIPGTVSDPYSATVRNDLVPNDFHAVGSIHSHPNGVLRPSDADLDTFGSGRVHIIIGSPYGPDDWEAFDQSGEVRDLDVLDADLSDPESFFDFTQDDIDAELDR.

The MPN domain occupies 10–131 (VGIAADALDF…WEAFDQSGEV (122 aa)). The active-site Proton donor/acceptor is E31. Residues H87, H89, and D100 each coordinate Zn(2+). The JAMM motif signature appears at 87 to 100 (HSHPNGVLRPSDAD).

Belongs to the peptidase M67B family. Monomer and homodimer. Zn(2+) serves as cofactor.

In terms of biological role, probable metalloprotease. Does not hydrolyze SAMP1- and SAMP2-protein conjugates, diglycine-AMC, Ub-AMC, hemoglobin, cytochrome c, carbonic anhydrase, creatinine phosphokinase, beta-amylase and bovine serum albumin. The sequence is that of Probable metalloprotease HVO_1016 from Haloferax volcanii (strain ATCC 29605 / DSM 3757 / JCM 8879 / NBRC 14742 / NCIMB 2012 / VKM B-1768 / DS2) (Halobacterium volcanii).